The sequence spans 338 residues: Heme A synthase (338 aa).

The next 5 helical transmembrane spans lie at 6–26 (ITKW…IGGI), 93–113 (GRIT…KGII), 118–138 (IAPY…GWYM), 154–174 (LAFH…QLIK), and 201–221 (VIYL…GLIY). Residue histidine 256 participates in heme binding. Transmembrane regions (helical) follow at residues 258–278 (LGGY…LKIE), 285–305 (IAYF…ITLL), and 308–328 (VPII…SVII). Residue histidine 316 participates in heme binding.

It belongs to the COX15/CtaA family. Type 2 subfamily. Interacts with CtaB. It depends on heme b as a cofactor.

It localises to the cell membrane. It catalyses the reaction Fe(II)-heme o + 2 A + H2O = Fe(II)-heme a + 2 AH2. It functions in the pathway porphyrin-containing compound metabolism; heme A biosynthesis; heme A from heme O: step 1/1. Its function is as follows. Catalyzes the conversion of heme O to heme A by two successive hydroxylations of the methyl group at C8. The first hydroxylation forms heme I, the second hydroxylation results in an unstable dihydroxymethyl group, which spontaneously dehydrates, resulting in the formyl group of heme A. The protein is Heme A synthase of Rickettsia canadensis (strain McKiel).